A 310-amino-acid chain; its full sequence is Pyrimidine-specific ribonucleoside hydrolase RihA (310 aa).

H240 is an active-site residue.

Belongs to the IUNH family. RihA subfamily.

Functionally, hydrolyzes cytidine or uridine to ribose and cytosine or uracil, respectively. The sequence is that of Pyrimidine-specific ribonucleoside hydrolase RihA from Photobacterium profundum (strain SS9).